The primary structure comprises 419 residues: L-rhamnose isomerase (419 aa).

His-262, Asp-294, and Asp-296 together coordinate Mn(2+).

The protein belongs to the rhamnose isomerase family. Homotetramer. It depends on Mn(2+) as a cofactor.

The protein localises to the cytoplasm. The catalysed reaction is L-rhamnopyranose = L-rhamnulose. It functions in the pathway carbohydrate degradation; L-rhamnose degradation; glycerone phosphate from L-rhamnose: step 1/3. Functionally, catalyzes the interconversion of L-rhamnose and L-rhamnulose. This Salmonella agona (strain SL483) protein is L-rhamnose isomerase.